A 933-amino-acid chain; its full sequence is Dual 3',5'-cyclic-AMP and -GMP phosphodiesterase 11A (933 aa).

The disordered stretch occupies residues 42-121 (HTSGQGASSL…LQRRASQKEL (80 aa)). A phosphoserine mark is found at serine 162, serine 163, and serine 239. GAF domains are found at residues 217–370 (DLTS…GIAI) and 402–558 (DLEK…GLGI). 3',5'-cyclic GMP is bound at residue serine 424. The PDEase domain maps to 588 to 912 (SKAEVDKFKA…RKWEELHQKR (325 aa)). Catalysis depends on histidine 664, which acts as the Proton donor. Positions 668, 704, 705, and 816 each coordinate a divalent metal cation. Residues 913–933 (LQVSAASPDPASPMVAGEDRL) form a disordered region.

It belongs to the cyclic nucleotide phosphodiesterase family. A divalent metal cation serves as cofactor. As to expression, expressed in testis and developing spermatoza.

Its subcellular location is the cytoplasm. The protein localises to the cytosol. It catalyses the reaction 3',5'-cyclic GMP + H2O = GMP + H(+). The enzyme catalyses 3',5'-cyclic AMP + H2O = AMP + H(+). Its activity is regulated as follows. Inhibited by 3-isobutyl-1-methylxanthine (IBMX), zaprinast and dipyridamole. cGMP acts as an allosteric activator. Functionally, plays a role in signal transduction by regulating the intracellular concentration of cyclic nucleotides cAMP and cGMP. Catalyzes the hydrolysis of both cAMP and cGMP to 5'-AMP and 5'-GMP, respectively. The sequence is that of Dual 3',5'-cyclic-AMP and -GMP phosphodiesterase 11A (Pde11a) from Mus musculus (Mouse).